Here is a 428-residue protein sequence, read N- to C-terminus: 3-phosphoshikimate 1-carboxyvinyltransferase (428 aa).

3 residues coordinate 3-phosphoshikimate: Lys-23, Ser-24, and Arg-28. Lys-23 is a phosphoenolpyruvate binding site. 2 residues coordinate phosphoenolpyruvate: Gly-97 and Arg-125. Residues Ser-170, Ser-171, Gln-172, Ser-198, Asp-314, Asn-337, and Lys-341 each coordinate 3-phosphoshikimate. A phosphoenolpyruvate-binding site is contributed by Gln-172. Residue Asp-314 is the Proton acceptor of the active site. Phosphoenolpyruvate contacts are provided by Arg-345, Arg-387, and Lys-412.

Belongs to the EPSP synthase family. In terms of assembly, monomer.

The protein resides in the cytoplasm. It catalyses the reaction 3-phosphoshikimate + phosphoenolpyruvate = 5-O-(1-carboxyvinyl)-3-phosphoshikimate + phosphate. Its pathway is metabolic intermediate biosynthesis; chorismate biosynthesis; chorismate from D-erythrose 4-phosphate and phosphoenolpyruvate: step 6/7. Catalyzes the transfer of the enolpyruvyl moiety of phosphoenolpyruvate (PEP) to the 5-hydroxyl of shikimate-3-phosphate (S3P) to produce enolpyruvyl shikimate-3-phosphate and inorganic phosphate. In Edwardsiella ictaluri (strain 93-146), this protein is 3-phosphoshikimate 1-carboxyvinyltransferase.